The primary structure comprises 196 residues: Phosphoheptose isomerase (196 aa).

Residues 35-194 (LTACLRCGGK…EKELFTPSGQ (160 aa)) enclose the SIS domain. 50 to 52 (NGG) contacts substrate. His59 and Glu63 together coordinate Zn(2+). Substrate-binding positions include Glu63, 92–93 (ND), 118–120 (STS), Ser123, and Gln170. Gln170 and His178 together coordinate Zn(2+).

The protein belongs to the SIS family. GmhA subfamily. Homotetramer. Zn(2+) is required as a cofactor.

Its subcellular location is the cytoplasm. It catalyses the reaction 2 D-sedoheptulose 7-phosphate = D-glycero-alpha-D-manno-heptose 7-phosphate + D-glycero-beta-D-manno-heptose 7-phosphate. Its pathway is carbohydrate biosynthesis; D-glycero-D-manno-heptose 7-phosphate biosynthesis; D-glycero-alpha-D-manno-heptose 7-phosphate and D-glycero-beta-D-manno-heptose 7-phosphate from sedoheptulose 7-phosphate: step 1/1. Functionally, catalyzes the isomerization of sedoheptulose 7-phosphate in D-glycero-D-manno-heptose 7-phosphate. In Syntrophotalea carbinolica (strain DSM 2380 / NBRC 103641 / GraBd1) (Pelobacter carbinolicus), this protein is Phosphoheptose isomerase.